We begin with the raw amino-acid sequence, 2713 residues long: Histone-lysine N-methyltransferase 2B (2713 aa).

The segment covering 1–11 has biased composition (gly residues); it reads MAAAAGGGSCP. 3 disordered regions span residues 1–65, 82–524, and 542–783; these read MAAA…GEDT, RLWA…PTVV, and VSAR…ARVA. At Ala-2 the chain carries N-acetylalanine. A compositionally biased stretch (low complexity) spans 12–24; the sequence is GPGSARGRFPGRP. The Menin-binding motif (MBM) signature appears at 17–36; the sequence is RGRFPGRPRGSGGGGGRGGR. 2 stretches are compositionally biased toward gly residues: residues 25–38 and 49–60; these read RGSGGGGGRGGRGN and RGGGAAGPGGAE. The segment at residues 37–44 is a DNA-binding region (a.T hook 1); it reads GNGAERVR. Over residues 109-123 the composition is skewed to acidic residues; it reads PEEESSDGESEEEEF. The a.T hook 2 DNA-binding region spans 110–117; it reads EEESSDGE. Ser-113, Ser-114, and Ser-118 each carry phosphoserine. A compositionally biased stretch (basic residues) spans 144-158; that stretch reads QRGRAPRGRGRKHKT. Basic and acidic residues predominate over residues 340-360; sequence PQRKDGDEPERGSCRKKQEQK. A DNA-binding region (a.T hook 3) is located at residues 357-365; it reads QEQKLEEEE. A compositionally biased stretch (acidic residues) spans 361–393; it reads LEEEEEEEEKEGEEKEEKDDNEDNNKQEEEEET. A compositionally biased stretch (basic and acidic residues) spans 394–412; the sequence is ERAVAEEEAMLAKEKEEAK. Positions 414–460 are enriched in pro residues; the sequence is PSPPLTPPVPSPPPPLPPPSTSPPPPASPLPPPVSPPPPLSPPPYPA. Low complexity predominate over residues 501–517; it reads GTLSPTPNPSTTTGSPL. Over residues 555-566 the composition is skewed to basic and acidic residues; the sequence is RFMDEDPPKPPK. A compositionally biased stretch (pro residues) spans 577–605; sequence ATSPPAPQEPVPVSSPPRVPTPPSTPVPL. The span at 606 to 617 shows a compositional bias: basic and acidic residues; the sequence is PEKRRSILREPT. The span at 627–645 shows a compositional bias: pro residues; it reads LPPPPPAPPPAPSPPPAPA. 3 stretches are compositionally biased toward low complexity: residues 646–657, 715–728, and 738–756; these read TPSRRPLLLRAP, VPVVTSPVKVEVPP, and QQLQLQQPPQALQTQLLPQ. Over residues 757–774 the composition is skewed to pro residues; sequence ALPPQQPQAQPPPSPQHT. Lys-810 participates in a covalent cross-link: Glycyl lysine isopeptide (Lys-Gly) (interchain with G-Cter in SUMO2). Residues Ser-826, Ser-849, and Ser-866 each carry the phosphoserine modification. Disordered stretches follow at residues 831–872 and 899–964; these read TEEA…QGPR and SALP…HHGK. Positions 841–862 are enriched in basic and acidic residues; the sequence is TPDRGCVRSEDESMEAKRDRAS. A compositionally biased stretch (low complexity) spans 912–922; it reads EDTSSASETES. Position 941 is a phosphoserine (Ser-941). A compositionally biased stretch (basic residues) spans 953–964; that stretch reads TPRRSLPSHHGK. A CXXC-type zinc finger spans residues 964–1011; that stretch reads KKMRMARCGHCRGCLRVQDCGSCVNCLDKPKFGGPNTKKQCCVYRKCD. Zn(2+) is bound by residues Cys-971, Cys-974, Cys-977, Cys-983, Cys-986, Cys-989, Cys-1005, and Cys-1010. 2 disordered regions span residues 1032–1076 and 1088–1138; these read LLPW…DSLL and QRPS…LQPV. Phosphoserine occurs at positions 1037, 1040, 1098, and 1101. Lys-1142 is covalently cross-linked (Glycyl lysine isopeptide (Lys-Gly) (interchain with G-Cter in SUMO2)). PHD-type zinc fingers lie at residues 1207 to 1258, 1255 to 1309, and 1341 to 1402; these read PMVC…CKFC, CKFC…CVRC, and GNYC…CAGA. Positions 1410–1510 constitute a Bromo domain; it reads ALSGALQGGL…GLLLKLLESA (101 aa). A disordered region spans residues 1550–1572; the sequence is RQQESETPESGQPPGDPSAAFQS. The C2HC pre-PHD-type zinc finger occupies 1584–1624; sequence PRQCALCLKYGDADSKEAGRLLYIGQNEWTHVNCAIWSAEV. The segment at 1645–1692 adopts a PHD-type 4 zinc-finger fold; that stretch reads MRCELCLKPGATVGCCLSSCLSNFHFMCARASYCIFQDDKKVFCQKHT. An FYR N-terminal domain is found at 1733 to 1789; the sequence is VINVLIGSIRINSLGTLSDLSDCEGRLFPIGYQCSRLYWSTVDARRRCWYRCRILEY. Positions 1808-1821 are enriched in polar residues; it reads QTIVHSPTPSSDTD. 5 disordered regions span residues 1808 to 1973, 2056 to 2104, 2116 to 2160, 2279 to 2356, and 2382 to 2408; these read QTIV…GPDF, QLDG…PPED, NLGG…RTFA, VSTF…RCPL, and YSAGEASSSEEEPPSPEDKENQVPKRV. Low complexity-rich tracts occupy residues 1872 to 1890 and 1923 to 1933; these read PLGGVSFGPLPSPGSPSSL and RRTSSPLRTSP. A phosphoserine mark is found at Ser-1926 and Ser-1932. Residues 1939–1950 show a composition bias toward polar residues; it reads LSTSVTALTPTS. Residues 2058-2068 show a composition bias toward acidic residues; it reads DGVDDGTDSEA. Thr-2064 and Thr-2079 each carry phosphothreonine. The span at 2084-2093 shows a compositional bias: gly residues; that stretch reads PGVGRGGVLG. Over residues 2140-2153 the composition is skewed to polar residues; it reads NGSQPPQSLSTSPA. 2 positions are modified to phosphoserine: Ser-2286 and Ser-2346. Residues 2409-2490 form the FYR C-terminal domain; it reads GPHLRFEISS…QRCQHYKFRY (82 aa). The short motif at 2506-2511 is the WDR5 interaction motif (WIN) element; it reads GAARAE. An SET domain is found at 2573–2689; the sequence is EAVGVYRSAI…RGEELTYDYK (117 aa). Residues His-2583, Arg-2585, Tyr-2627, and 2650–2651 contribute to the S-adenosyl-L-methionine site; that span reads NH. Cys-2653 and Cys-2701 together coordinate Zn(2+). The 17-residue stretch at 2697-2713 folds into the Post-SET domain; that stretch reads NKLPCNCGAKRCRRFLN. Asn-2702 is a binding site for S-adenosyl-L-methionine. Zn(2+) contacts are provided by Cys-2703 and Cys-2708.

It belongs to the class V-like SAM-binding methyltransferase superfamily. Histone-lysine methyltransferase family. TRX/MLL subfamily. As to quaternary structure, component of the menin-associated histone methyltransferase complex, at least composed of KMT2B/MLL4, ASH2L, RBBP5, WDR5, DPY30, MEN1; the complex interacts with POLR2A and POLR2B via MEN1. Interacts with NFE2. Interacts with KDM6B. Interacts (via WIN motif) with WDR5. Interacts (via MBM motif) with MEN1.

It localises to the nucleus. The catalysed reaction is L-lysyl(4)-[histone H3] + S-adenosyl-L-methionine = N(6)-methyl-L-lysyl(4)-[histone H3] + S-adenosyl-L-homocysteine + H(+). It catalyses the reaction N(6)-methyl-L-lysyl(4)-[histone H3] + S-adenosyl-L-methionine = N(6),N(6)-dimethyl-L-lysyl(4)-[histone H3] + S-adenosyl-L-homocysteine + H(+). Its function is as follows. Histone methyltransferase that catalyzes methyl group transfer from S-adenosyl-L-methionine to the epsilon-amino group of 'Lys-4' of histone H3 (H3K4) via a non-processive mechanism. Part of chromatin remodeling machinery predominantly forms H3K4me1 and H3K4me2 methylation marks at active chromatin sites where transcription and DNA repair take place. Likely plays a redundant role with KMT2C in enriching H3K4me1 marks on primed and active enhancer elements. Plays a central role in beta-globin locus transcription regulation by being recruited by NFE2. Plays an important role in controlling bulk H3K4me during oocyte growth and preimplantation development. Required during the transcriptionally active period of oocyte growth for the establishment and/or maintenance of bulk H3K4 trimethylation (H3K4me3), global transcriptional silencing that preceeds resumption of meiosis, oocyte survival and normal zygotic genome activation. The polypeptide is Histone-lysine N-methyltransferase 2B (Kmt2b) (Mus musculus (Mouse)).